Here is a 429-residue protein sequence, read N- to C-terminus: D-amino acid dehydrogenase (429 aa).

An FAD-binding site is contributed by 3–17 (VLILGSGVIGTTTAW).

It belongs to the DadA oxidoreductase family. The cofactor is FAD.

It catalyses the reaction a D-alpha-amino acid + A + H2O = a 2-oxocarboxylate + AH2 + NH4(+). Its pathway is amino-acid degradation; D-alanine degradation; NH(3) and pyruvate from D-alanine: step 1/1. Functionally, oxidative deamination of D-amino acids. This is D-amino acid dehydrogenase from Xanthomonas campestris pv. campestris (strain 8004).